The following is an 89-amino-acid chain: Myrmicitoxin(1)-Pm2a (89 aa).

Residues 1–22 (MEIPKLLYIAVIAIGLSGSLTC) form the signal peptide. Positions 23 to 61 (ATPLANPWGDPEAEANPEAKATAEATAEAIAEALAEPEP) are excised as a propeptide. Asparagine 88 carries the asparagine amide modification.

It belongs to the formicidae venom clade 1 family. Expressed by the venom gland.

It is found in the secreted. Toxin that potently modulates mammalian voltage-gated sodium (Nav) channels, reducing the voltage threshold for activation and inhibiting channel inactivation. Shows activity on hNav1.6/SCN8A (EC(50)=176 nM), mNav1.7/SCN9A (EC(50)=102 nM) and hNav1.7 (EC(50)=154 nM). In vivo, causes spontaneous, gradual and long-lasting nocifensive behaviors by intraplantar injection in mice, as well as pronounced swelling of the injected paw. Does not have effect on insects (blowflies). In Pogonomyrmex maricopa (Maricopa harvester ant), this protein is Myrmicitoxin(1)-Pm2a.